The following is a 455-amino-acid chain: Bifunctional protein GlmU (455 aa).

Positions 1–227 are pyrophosphorylase; sequence MGLSVIILAA…CEEVQGVNDR (227 aa). UDP-N-acetyl-alpha-D-glucosamine-binding positions include 8 to 11, Lys22, Gln73, 78 to 79, 100 to 102, Gly137, Glu152, Asn167, and Asn225; these read LAAG, GT, and YGD. Asp102 contacts Mg(2+). Residue Asn225 coordinates Mg(2+). Residues 228 to 248 are linker; that stretch reads WELTKLERYYQRLMAKKLSLA. Residues 249-455 are N-acetyltransferase; it reads GVTIIDPERF…KGWHRPTKKE (207 aa). 2 residues coordinate UDP-N-acetyl-alpha-D-glucosamine: Arg332 and Lys350. Catalysis depends on His362, which acts as the Proton acceptor. The UDP-N-acetyl-alpha-D-glucosamine site is built by Tyr365 and Asn376. Residues Ala379, 385 to 386, Ser404, Ala422, and Arg439 each bind acetyl-CoA; that span reads NY.

This sequence in the N-terminal section; belongs to the N-acetylglucosamine-1-phosphate uridyltransferase family. The protein in the C-terminal section; belongs to the transferase hexapeptide repeat family. In terms of assembly, homotrimer. Requires Mg(2+) as cofactor.

It is found in the cytoplasm. It catalyses the reaction alpha-D-glucosamine 1-phosphate + acetyl-CoA = N-acetyl-alpha-D-glucosamine 1-phosphate + CoA + H(+). The catalysed reaction is N-acetyl-alpha-D-glucosamine 1-phosphate + UTP + H(+) = UDP-N-acetyl-alpha-D-glucosamine + diphosphate. The protein operates within nucleotide-sugar biosynthesis; UDP-N-acetyl-alpha-D-glucosamine biosynthesis; N-acetyl-alpha-D-glucosamine 1-phosphate from alpha-D-glucosamine 6-phosphate (route II): step 2/2. It functions in the pathway nucleotide-sugar biosynthesis; UDP-N-acetyl-alpha-D-glucosamine biosynthesis; UDP-N-acetyl-alpha-D-glucosamine from N-acetyl-alpha-D-glucosamine 1-phosphate: step 1/1. Its pathway is bacterial outer membrane biogenesis; LPS lipid A biosynthesis. Its function is as follows. Catalyzes the last two sequential reactions in the de novo biosynthetic pathway for UDP-N-acetylglucosamine (UDP-GlcNAc). The C-terminal domain catalyzes the transfer of acetyl group from acetyl coenzyme A to glucosamine-1-phosphate (GlcN-1-P) to produce N-acetylglucosamine-1-phosphate (GlcNAc-1-P), which is converted into UDP-GlcNAc by the transfer of uridine 5-monophosphate (from uridine 5-triphosphate), a reaction catalyzed by the N-terminal domain. The polypeptide is Bifunctional protein GlmU (Coxiella burnetii (strain RSA 493 / Nine Mile phase I)).